We begin with the raw amino-acid sequence, 168 residues long: Small ribosomal subunit protein uS5 (168 aa).

Positions 11–74 (YSEKVVKIDR…ESAKKHLVKI (64 aa)) constitute an S5 DRBM domain.

This sequence belongs to the universal ribosomal protein uS5 family. As to quaternary structure, part of the 30S ribosomal subunit. Contacts proteins S4 and S8.

Functionally, with S4 and S12 plays an important role in translational accuracy. In terms of biological role, located at the back of the 30S subunit body where it stabilizes the conformation of the head with respect to the body. In Leptospira interrogans serogroup Icterohaemorrhagiae serovar copenhageni (strain Fiocruz L1-130), this protein is Small ribosomal subunit protein uS5.